A 1850-amino-acid polypeptide reads, in one-letter code: Vitellogenin-2 (1850 aa).

Residues 1–15 (MRGIILALVLTLVGS) form the signal peptide. In terms of domain architecture, Vitellogenin spans 24 to 662 (FNSRRSYLYN…SPRTMFPSAI (639 aa)). The N-linked (GlcNAc...) asparagine glycan is linked to N604. The tract at residues 935–984 (DAPLDVTEEPFQTSERASREHFAMQGPDSMPRKQSHSSREDLRRSTGKRA) is disordered. N1094 carries N-linked (GlcNAc...) asparagine glycosylation. 2 disordered regions span residues 1115 to 1313 (GTEP…SSSS) and 1338 to 1362 (EFPK…SHDT). Positions 1122-1143 (TSSSSSSASSTATSSSSSSASS) are enriched in low complexity. The span at 1156–1165 (DQVKQARNKD) shows a compositional bias: basic and acidic residues. A compositionally biased stretch (low complexity) spans 1167-1266 (SSSSRSSKSS…SRSSSSSSKS (100 aa)). N-linked (GlcNAc...) asparagine glycans are attached at residues N1177 and N1188. The segment covering 1267-1277 (SSHHSHSHHSG) has biased composition (basic residues). Low complexity predominate over residues 1278-1291 (HLNGSSSSSSSSRS). N1280 carries an N-linked (GlcNAc...) asparagine glycan. The span at 1338–1350 (EFPKRKLPGDRAT) shows a compositional bias: basic and acidic residues. N-linked (GlcNAc...) asparagine glycosylation is found at N1417, N1597, and N1665. The VWFD domain occupies 1579–1756 (ARCSVSYNKI…SWILEEAPCR (178 aa)). 2 disulfides stabilise this stretch: C1581-C1719 and C1604-C1755.

Post-translationally, phosvitin, an egg yolk storage protein, is one of the most highly phosphorylated (10%) proteins in nature. In terms of processing, cathepsin D is responsible for intraoocytic processing of vitellogenin. May contain intrachain disulfide bonds. As to expression, after incorporation from serum via a specific receptor, it is cleaved into four fragments, heavy and light chain lipovitellins, phosphovitin and YGP40, and YGP40 is released into the yolk plasma before or during compartmentation of lipovitellin-phosvitin complex into the yolk granule.

In terms of biological role, precursor of the major egg-yolk proteins that are sources of nutrients during early development of oviparous organisms. Phosvitin is believed to be of importance in sequestering calcium, iron and other cations for the developing embryo. This Gallus gallus (Chicken) protein is Vitellogenin-2 (VTG2).